Consider the following 339-residue polypeptide: Diacylglycerol acyltransferase/mycolyltransferase Ag85A (339 aa).

The first 43 residues, Met1–Ala43, serve as a signal peptide directing secretion. Met85–Arg86 lines the substrate pocket. Residues Phe101–Val111 are fibronectin-binding. Cys130 and Cys135 are oxidised to a cystine. Substrate-binding residues include Ser169 and Asp197. The Nucleophile role is filled by Ser169. The active site involves Glu272. Residues Phe274–Thr277, Lys281, and His304–Trp306 contribute to the substrate site. Residue His304 is part of the active site.

Belongs to the mycobacterial A85 antigen family. In terms of assembly, homodimer.

The protein localises to the secreted. Its subcellular location is the cell wall. It localises to the cytoplasm. It carries out the reaction an acyl-CoA + a 1,2-diacyl-sn-glycerol = a triacyl-sn-glycerol + CoA. The catalysed reaction is 2 alpha,alpha'-trehalose 6-mycolate = alpha,alpha'-trehalose 6,6'-bismycolate + alpha,alpha-trehalose. Functionally, the antigen 85 proteins (FbpA, FbpB, FbpC) are responsible for the high affinity of mycobacteria for fibronectin, a large adhesive glycoprotein, which facilitates the attachment of M.tuberculosis to murine alveolar macrophages (AMs). They also help to maintain the integrity of the cell wall by catalyzing the transfer of mycolic acids to cell wall arabinogalactan, and through the synthesis of alpha,alpha-trehalose dimycolate (TDM, cord factor). They catalyze the transfer of a mycoloyl residue from one molecule of alpha,alpha-trehalose monomycolate (TMM) to another TMM, leading to the formation of TDM. FbpA mediates triacylglycerol (TAG) formation with long-chain acyl-CoA as the acyl donor and 1,2-dipalmitoyl-sn-glycerol (1,2-dipalmitin) as the acyl acceptor. It has a preference for C26:0-CoA over C18:1-CoA. In Mycobacterium gordonae, this protein is Diacylglycerol acyltransferase/mycolyltransferase Ag85A (fbpA).